A 115-amino-acid polypeptide reads, in one-letter code: Nitrogenase iron-iron protein delta chain (115 aa).

Hexamer of two alpha, two beta, and two delta chains. The cofactor is iron-sulfur cluster.

The catalysed reaction is N2 + 8 reduced [2Fe-2S]-[ferredoxin] + 16 ATP + 16 H2O = H2 + 8 oxidized [2Fe-2S]-[ferredoxin] + 2 NH4(+) + 16 ADP + 16 phosphate + 6 H(+). The key enzymatic reactions in nitrogen fixation are catalyzed by the nitrogenase complex, which has 2 components: the iron protein (component 2) and a component 1 which is either a molybdenum-iron protein, a vanadium-iron, or an iron-iron protein. The chain is Nitrogenase iron-iron protein delta chain (anfG) from Rhodobacter capsulatus (Rhodopseudomonas capsulata).